The primary structure comprises 509 residues: Photosystem II CP47 reaction center protein (509 aa).

6 helical membrane-spanning segments follow: residues 21-36 (AVHLMHTALVAGWAGS), 101-115 (IVLSGMLFLAAIWHW), 140-156 (GIHLLLSSLLCFGFGAF), 203-218 (IAAGTVGILAGVFHLT), 237-252 (VLSSSISAVFFSAFVT), and 457-472 (NFALIFFFGHLWHGSR).

This sequence belongs to the PsbB/PsbC family. PsbB subfamily. PSII is composed of 1 copy each of membrane proteins PsbA, PsbB, PsbC, PsbD, PsbE, PsbF, PsbH, PsbI, PsbJ, PsbK, PsbL, PsbM, PsbT, PsbX, PsbY, PsbZ, Psb30/Ycf12, at least 3 peripheral proteins of the oxygen-evolving complex and a large number of cofactors. It forms dimeric complexes. The cofactor is Binds multiple chlorophylls. PSII binds additional chlorophylls, carotenoids and specific lipids..

Its subcellular location is the plastid. It localises to the chloroplast thylakoid membrane. In terms of biological role, one of the components of the core complex of photosystem II (PSII). It binds chlorophyll and helps catalyze the primary light-induced photochemical processes of PSII. PSII is a light-driven water:plastoquinone oxidoreductase, using light energy to abstract electrons from H(2)O, generating O(2) and a proton gradient subsequently used for ATP formation. The polypeptide is Photosystem II CP47 reaction center protein (Pyropia yezoensis (Susabi-nori)).